We begin with the raw amino-acid sequence, 194 residues long: WASH complex subunit 3 (194 aa).

An N-acetylmethionine modification is found at methionine 1. The stretch at 46–74 (AVCEEKLADLSLRIQQIETTLNILDAKLS) forms a coiled coil. Disordered stretches follow at residues 94 to 126 (VTNG…PSEN) and 158 to 194 (SEGL…SFSD). The span at 98–113 (SHSETTSEQTQQNSTQ) shows a compositional bias: low complexity. Residues 114 to 126 (DSGAQESEAPSEN) are compositionally biased toward polar residues.

It belongs to the CCDC53 family. Component of the WASH core complex also described as WASH regulatory complex (SHRC) composed of WASHC1, WASHC2, WASHC3, WASHC4 and WASHC5. The WASH core complex associates via WASHC2 with the F-actin-capping protein dimer (formed by CAPZA1, CAPZA2 or CAPZA3 and CAPZB) in a transient or substoichiometric manner which was initially described as WASH complex.

The protein resides in the early endosome. Its function is as follows. Acts as a component of the WASH core complex that functions as a nucleation-promoting factor (NPF) at the surface of endosomes, where it recruits and activates the Arp2/3 complex to induce actin polymerization, playing a key role in the fission of tubules that serve as transport intermediates during endosome sortingg. This chain is WASH complex subunit 3, found in Mus musculus (Mouse).